The chain runs to 339 residues: Glycerol-3-phosphate dehydrogenase [NAD(P)+] (339 aa).

4 residues coordinate NADPH: Ser-15, Tyr-16, His-36, and Lys-110. Lys-110, Gly-139, and Thr-141 together coordinate sn-glycerol 3-phosphate. Residue Ala-143 coordinates NADPH. Positions 195, 248, 258, 259, and 260 each coordinate sn-glycerol 3-phosphate. Lys-195 (proton acceptor) is an active-site residue. Position 259 (Arg-259) interacts with NADPH. Val-283 and Glu-285 together coordinate NADPH.

Belongs to the NAD-dependent glycerol-3-phosphate dehydrogenase family.

It is found in the cytoplasm. The catalysed reaction is sn-glycerol 3-phosphate + NAD(+) = dihydroxyacetone phosphate + NADH + H(+). It carries out the reaction sn-glycerol 3-phosphate + NADP(+) = dihydroxyacetone phosphate + NADPH + H(+). It functions in the pathway membrane lipid metabolism; glycerophospholipid metabolism. Catalyzes the reduction of the glycolytic intermediate dihydroxyacetone phosphate (DHAP) to sn-glycerol 3-phosphate (G3P), the key precursor for phospholipid synthesis. This Pectobacterium carotovorum subsp. carotovorum (strain PC1) protein is Glycerol-3-phosphate dehydrogenase [NAD(P)+].